Reading from the N-terminus, the 283-residue chain is Diaminopimelate epimerase (283 aa).

Residues Asn13 and Asn65 each contribute to the substrate site. The active-site Proton donor is the Cys74. Residues 75–76, Asn196, and 214–215 contribute to the substrate site; these read GN and ER. The active-site Proton acceptor is the Cys223. 224–225 contributes to the substrate binding site; it reads GT.

This sequence belongs to the diaminopimelate epimerase family. Homodimer.

It localises to the cytoplasm. It carries out the reaction (2S,6S)-2,6-diaminopimelate = meso-2,6-diaminopimelate. It participates in amino-acid biosynthesis; L-lysine biosynthesis via DAP pathway; DL-2,6-diaminopimelate from LL-2,6-diaminopimelate: step 1/1. In terms of biological role, catalyzes the stereoinversion of LL-2,6-diaminopimelate (L,L-DAP) to meso-diaminopimelate (meso-DAP), a precursor of L-lysine and an essential component of the bacterial peptidoglycan. In Alkaliphilus metalliredigens (strain QYMF), this protein is Diaminopimelate epimerase.